The following is a 379-amino-acid chain: Chaperone protein DnaJ (379 aa).

The 65-residue stretch at 5 to 69 folds into the J domain; that stretch reads EYYERLGVDK…QKRAAYDQYG (65 aa). Residues 141–223 form a CR-type zinc finger; it reads GVEKQVKYNR…CHGSGHEKVA (83 aa). The Zn(2+) site is built by C154, C157, C171, C174, C197, C200, C211, and C214. CXXCXGXG motif repeat units follow at residues 154-161, 171-178, 197-204, and 211-218; these read CHTCGGSG, CHKCGGRG, CDVCNGTG, and CETCHGSG.

This sequence belongs to the DnaJ family. Homodimer. It depends on Zn(2+) as a cofactor.

The protein localises to the cytoplasm. Participates actively in the response to hyperosmotic and heat shock by preventing the aggregation of stress-denatured proteins and by disaggregating proteins, also in an autonomous, DnaK-independent fashion. Unfolded proteins bind initially to DnaJ; upon interaction with the DnaJ-bound protein, DnaK hydrolyzes its bound ATP, resulting in the formation of a stable complex. GrpE releases ADP from DnaK; ATP binding to DnaK triggers the release of the substrate protein, thus completing the reaction cycle. Several rounds of ATP-dependent interactions between DnaJ, DnaK and GrpE are required for fully efficient folding. Also involved, together with DnaK and GrpE, in the DNA replication of plasmids through activation of initiation proteins. The chain is Chaperone protein DnaJ from Lactococcus lactis subsp. lactis (strain IL1403) (Streptococcus lactis).